Consider the following 515-residue polypeptide: Alpha-1B adrenergic receptor (515 aa).

The Extracellular segment spans residues Met1–Ala45. Asn10, Asn24, and Asn34 each carry an N-linked (GlcNAc...) asparagine glycan. Residues Ile46–Val70 traverse the membrane as a helical segment. The Cytoplasmic portion of the chain corresponds to Ala71–Phe83. The helical transmembrane segment at Ile84–Leu105 threads the bilayer. Residues Glu106–Arg115 are Extracellular-facing. Residues Ile116–Ile141 form a helical membrane-spanning segment. The cysteines at positions 118 and 195 are disulfide-linked. Topologically, residues Asp142–Lys161 are cytoplasmic. A helical membrane pass occupies residues Ala162–Leu182. The Extracellular segment spans residues Gly183–Pro201. The helical transmembrane segment at Phe202 to Cys224 threads the bilayer. The Cytoplasmic portion of the chain corresponds to Arg225–Thr295. Thr264 is modified (phosphothreonine). The chain crosses the membrane as a helical span at residues Leu296–Leu319. Residues Phe320–Pro326 lie on the Extracellular side of the membrane. Residues Asp327–Ser351 form a helical membrane-spanning segment. Residues Ser352–Phe515 are Cytoplasmic-facing. A lipid anchor (S-palmitoyl cysteine) is attached at Cys365. The short motif at Arg368 to Arg378 is the Nuclear localization signal element. Disordered regions lie at residues Gly392–Gly430 and Leu474–Phe515. Composition is skewed to polar residues over residues Ser410–Pro424 and Gly484–Ala498.

This sequence belongs to the G-protein coupled receptor 1 family. Adrenergic receptor subfamily. ADRA1B sub-subfamily. Homo- and heterooligomer. Heterooligomerizes with ADRA1B homooligomers in cardiac myocytes. Interacts with CAVIN4.

It is found in the nucleus membrane. The protein localises to the cell membrane. It localises to the cytoplasm. Its subcellular location is the membrane. The protein resides in the caveola. Its function is as follows. This alpha-adrenergic receptor mediates its action by association with G proteins that activate a phosphatidylinositol-calcium second messenger system. Its effect is mediated by G(q) and G(11) proteins. Nuclear ADRA1A-ADRA1B heterooligomers regulate phenylephrine (PE)-stimulated ERK signaling in cardiac myocytes. In Rattus norvegicus (Rat), this protein is Alpha-1B adrenergic receptor (Adra1b).